Consider the following 204-residue polypeptide: CDP-archaeol synthase (204 aa).

6 helical membrane-spanning segments follow: residues 5–25 (VYACFLGLYFLVFSLIVYVIL), 43–63 (MLWVLPAYVANASPVVFSRLV), 91–111 (FEGFLGGMLSGVLVGILLAYA), 116–136 (GVSAFLLPLGALLGDLGGAFV), 147–167 (PAILLDQLDFVAGALILQGLF), and 175–195 (VVVAVVLLTPIVHLLTNMAAF).

Belongs to the CDP-archaeol synthase family. It depends on Mg(2+) as a cofactor.

It localises to the cell membrane. The enzyme catalyses 2,3-bis-O-(geranylgeranyl)-sn-glycerol 1-phosphate + CTP + H(+) = CDP-2,3-bis-O-(geranylgeranyl)-sn-glycerol + diphosphate. It participates in membrane lipid metabolism; glycerophospholipid metabolism. Its function is as follows. Catalyzes the formation of CDP-2,3-bis-(O-geranylgeranyl)-sn-glycerol (CDP-archaeol) from 2,3-bis-(O-geranylgeranyl)-sn-glycerol 1-phosphate (DGGGP) and CTP. This reaction is the third ether-bond-formation step in the biosynthesis of archaeal membrane lipids. This chain is CDP-archaeol synthase, found in Thermofilum pendens (strain DSM 2475 / Hrk 5).